A 417-amino-acid chain; its full sequence is Cysteate synthase (417 aa).

K102 is subject to N6-(pyridoxal phosphate)lysine. Pyridoxal 5'-phosphate-binding residues include N128 and T380.

The protein belongs to the threonine synthase family. Cysteate synthase subfamily. In terms of assembly, homotrimer. The cofactor is pyridoxal 5'-phosphate.

It carries out the reaction O-phospho-L-serine + sulfite + H(+) = L-cysteate + phosphate. Its pathway is cofactor biosynthesis; coenzyme M biosynthesis. Functionally, specifically catalyzes the beta-elimination of phosphate from L-phosphoserine and the beta-addition of sulfite to the dehydroalanine intermediate to produce L-cysteate. This chain is Cysteate synthase, found in Methanocella arvoryzae (strain DSM 22066 / NBRC 105507 / MRE50).